Reading from the N-terminus, the 229-residue chain is Heptaprenylglyceryl phosphate synthase (229 aa).

Lys12 contacts sn-glycerol 1-phosphate. Residues Asp14 and Ser40 each coordinate Mg(2+). Sn-glycerol 1-phosphate-binding positions include 159–164 (YLEYSG), Gly189, and 209–210 (GN).

Belongs to the GGGP/HepGP synthase family. Group I subfamily. As to quaternary structure, homodimer. Requires Mg(2+) as cofactor.

It carries out the reaction sn-glycerol 1-phosphate + all-trans-heptaprenyl diphosphate = 3-heptaprenyl-sn-glycero-1-phosphate + diphosphate. Its pathway is membrane lipid metabolism; glycerophospholipid metabolism. Its function is as follows. Prenyltransferase that catalyzes in vivo the transfer of the heptaprenyl moiety of heptaprenyl pyrophosphate (HepPP; 35 carbon atoms) to the C3 hydroxyl of sn-glycerol-1-phosphate (G1P), producing heptaprenylglyceryl phosphate (HepGP). This reaction is an ether-bond-formation step in the biosynthesis of archaea-type G1P-based membrane lipids found in Bacillales. This Bacillus anthracis (strain A0248) protein is Heptaprenylglyceryl phosphate synthase.